We begin with the raw amino-acid sequence, 360 residues long: Phospho-N-acetylmuramoyl-pentapeptide-transferase (360 aa).

Residues 1-25 (MLVWLAEHLVKYYSGFNVFSYLTFR) are Periplasmic-facing. Residues 26–46 (AIVSLLTALFISLWMGPRMIA) form a helical membrane-spanning segment. Topologically, residues 47–71 (HLQKLSFGQVVRNDGPESHFSKRGT) are cytoplasmic. Residues 72 to 92 (PTMGGIMILTAIVISVLLWAY) traverse the membrane as a helical segment. Residue Pro93 is a topological domain, periplasmic. Residues 94 to 114 (SNPYVWCVLVVLVGYGVIGFV) traverse the membrane as a helical segment. The Cytoplasmic segment spans residues 115 to 131 (DDYRKVVRKDTKGLIAR). The chain crosses the membrane as a helical span at residues 132-152 (WKYFWMSVIALGVAFALYLAG). The Periplasmic segment spans residues 153 to 167 (KDTPATQLVVPFFKD). Residues 168–188 (VMPQLGLFYILLAYFVIVGTG) traverse the membrane as a helical segment. The Cytoplasmic segment spans residues 189–198 (NAVNLTDGLD). Residues 199 to 219 (GLAIMPTVFVAGGFALVAWAT) form a helical membrane-spanning segment. At 220–235 (GNMNFASYLHIPYLRH) the chain is on the periplasmic side. The chain crosses the membrane as a helical span at residues 236–256 (AGELVIVCTAIVGAGLGFLWF). At 257–262 (NTYPAQ) the chain is on the cytoplasmic side. Residues 263-283 (VFMGDVGSLALGGALGIIAVL) traverse the membrane as a helical segment. The Periplasmic portion of the chain corresponds to 284–287 (LRQE). Residues 288 to 308 (FLLVIMGGVFVVETLSVILQV) traverse the membrane as a helical segment. The Cytoplasmic portion of the chain corresponds to 309–337 (GSFKLRGQRIFRMAPIHHHYELKGWPEPR). A helical membrane pass occupies residues 338 to 358 (VIVRFWIISLMLVLIGLATLK). Residues 359-360 (VR) lie on the Periplasmic side of the membrane.

Belongs to the glycosyltransferase 4 family. MraY subfamily. Mg(2+) serves as cofactor.

Its subcellular location is the cell inner membrane. The enzyme catalyses UDP-N-acetyl-alpha-D-muramoyl-L-alanyl-gamma-D-glutamyl-meso-2,6-diaminopimeloyl-D-alanyl-D-alanine + di-trans,octa-cis-undecaprenyl phosphate = di-trans,octa-cis-undecaprenyl diphospho-N-acetyl-alpha-D-muramoyl-L-alanyl-D-glutamyl-meso-2,6-diaminopimeloyl-D-alanyl-D-alanine + UMP. Its pathway is cell wall biogenesis; peptidoglycan biosynthesis. Catalyzes the initial step of the lipid cycle reactions in the biosynthesis of the cell wall peptidoglycan: transfers peptidoglycan precursor phospho-MurNAc-pentapeptide from UDP-MurNAc-pentapeptide onto the lipid carrier undecaprenyl phosphate, yielding undecaprenyl-pyrophosphoryl-MurNAc-pentapeptide, known as lipid I. The chain is Phospho-N-acetylmuramoyl-pentapeptide-transferase from Shigella boydii serotype 18 (strain CDC 3083-94 / BS512).